An 89-amino-acid chain; its full sequence is Small ribosomal subunit protein uS17 (89 aa).

Belongs to the universal ribosomal protein uS17 family. In terms of assembly, part of the 30S ribosomal subunit.

In terms of biological role, one of the primary rRNA binding proteins, it binds specifically to the 5'-end of 16S ribosomal RNA. The chain is Small ribosomal subunit protein uS17 from Nocardia farcinica (strain IFM 10152).